Here is a 306-residue protein sequence, read N- to C-terminus: Phosphoadenosine phosphosulfate reductase (306 aa).

2 disordered regions span residues 1 to 30 (MPAK…VSGG) and 245 to 266 (YHST…KGQA).

This sequence belongs to the PAPS reductase family. CysH subfamily.

The enzyme catalyses [thioredoxin]-disulfide + sulfite + adenosine 3',5'-bisphosphate + 2 H(+) = [thioredoxin]-dithiol + 3'-phosphoadenylyl sulfate. Its pathway is sulfur metabolism; hydrogen sulfide biosynthesis; sulfite from sulfate: step 3/3. In terms of biological role, the NADP dependent reduction of PAPS into sulfite involves thioredoxin which probably plays the role of a thiol carrier. This is Phosphoadenosine phosphosulfate reductase (sA) from Emericella nidulans (strain FGSC A4 / ATCC 38163 / CBS 112.46 / NRRL 194 / M139) (Aspergillus nidulans).